Here is a 695-residue protein sequence, read N- to C-terminus: Phosphate acetyltransferase (695 aa).

The tract at residues A372–R695 is phosphate acetyltransferase.

In the N-terminal section; belongs to the CobB/CobQ family. The protein in the C-terminal section; belongs to the phosphate acetyltransferase and butyryltransferase family. In terms of assembly, homohexamer.

It localises to the cytoplasm. The catalysed reaction is acetyl-CoA + phosphate = acetyl phosphate + CoA. It functions in the pathway metabolic intermediate biosynthesis; acetyl-CoA biosynthesis; acetyl-CoA from acetate: step 2/2. Its function is as follows. Involved in acetate metabolism. This Nitrosomonas europaea (strain ATCC 19718 / CIP 103999 / KCTC 2705 / NBRC 14298) protein is Phosphate acetyltransferase (pta).